The sequence spans 987 residues: UPF0182 protein DIP0733 (987 aa).

7 consecutive transmembrane segments (helical) span residues 19–39, 63–83, 115–135, 176–196, 212–234, 261–281, and 290–310; these read LTWLIPLLMILGALVPTVVDL, IGLFVGFGLLAGIVTFLAGWF, FLVVLPVVIGIAAGFLGQQAW, SVLLVVAFLIALVGHYLLGGI, YAKVQLAVTGGLYLLVRMASYWL, AKIVLLVISAVVAISFFSVIV, and ISTVLMIVSSLAIGNAWPIMM. Residues 904–927 show a composition bias toward basic and acidic residues; that stretch reads DLGEAKGLKPESQNRDKPEDKEGK. Positions 904–950 are disordered; the sequence is DLGEAKGLKPESQNRDKPEDKEGKAPSTPSAPASGSGTTGEAIGKIN. Residues 928–943 are compositionally biased toward low complexity; it reads APSTPSAPASGSGTTG.

Belongs to the UPF0182 family.

The protein resides in the cell membrane. The sequence is that of UPF0182 protein DIP0733 from Corynebacterium diphtheriae (strain ATCC 700971 / NCTC 13129 / Biotype gravis).